A 125-amino-acid chain; its full sequence is Phosphoribosyl-AMP cyclohydrolase (125 aa).

Aspartate 74 contacts Mg(2+). Cysteine 75 contacts Zn(2+). Mg(2+) is bound by residues aspartate 76 and aspartate 78. 2 residues coordinate Zn(2+): cysteine 92 and cysteine 99.

This sequence belongs to the PRA-CH family. Homodimer. Mg(2+) is required as a cofactor. The cofactor is Zn(2+).

The protein localises to the cytoplasm. It catalyses the reaction 1-(5-phospho-beta-D-ribosyl)-5'-AMP + H2O = 1-(5-phospho-beta-D-ribosyl)-5-[(5-phospho-beta-D-ribosylamino)methylideneamino]imidazole-4-carboxamide. Its pathway is amino-acid biosynthesis; L-histidine biosynthesis; L-histidine from 5-phospho-alpha-D-ribose 1-diphosphate: step 3/9. Functionally, catalyzes the hydrolysis of the adenine ring of phosphoribosyl-AMP. This chain is Phosphoribosyl-AMP cyclohydrolase, found in Desulfatibacillum aliphaticivorans.